The sequence spans 1046 residues: Multidrug resistance protein MexB (1046 aa).

Residues 1-9 (MSKFFIDRP) are Cytoplasmic-facing. Residues 10 to 28 (IFAWVIALVIMLAGGLSIL) traverse the membrane as a helical segment. The Periplasmic segment spans residues 29–339 (SLPVNQYPAI…TPVVSASIHE (311 aa)). Residues 340 to 359 (VVKTLGEAILLVFLVMYLFL) form a helical membrane-spanning segment. The Cytoplasmic segment spans residues 360-365 (QNFRAT). Residues 366–385 (LIPTIAVPVVLLGTFGVLAA) form a helical membrane-spanning segment. At 386-391 (FGFSIN) the chain is on the periplasmic side. Residues 392–413 (TLTMFGMVLAIGLLVDDAIVVV) form a helical membrane-spanning segment. Residues 414 to 441 (ENVERVMAEEGLSPREAARKSMGQIQGA) lie on the Cytoplasmic side of the membrane. The chain crosses the membrane as a helical span at residues 442 to 460 (LVGIAMVLSAVFLPMAFFG). Over 461–473 (GSTGVIYRQFSIT) the chain is Periplasmic. A helical transmembrane segment spans residues 474–496 (IVSAMALSVIVALILTPALCATM). The Cytoplasmic portion of the chain corresponds to 497 to 538 (LKPIEKGDHGEHKGGFFGWFNRMFLSTTHGYERGVASILKHR). The helical transmembrane segment at 539–557 (APYLLIYVVIVAGMIWMFT) threads the bilayer. Over 558–871 (RIPTAFLPDE…SYEERLSGSQ (314 aa)) the chain is Periplasmic. Residues 872–891 (APALYALSLLVVFLCLAALY) traverse the membrane as a helical segment. Topologically, residues 892–897 (ESWSIP) are cytoplasmic. The chain crosses the membrane as a helical span at residues 898 to 917 (FSVMLVVPLGVIGALLATSM). At 918-923 (RGLSND) the chain is on the periplasmic side. The helical transmembrane segment at 924 to 945 (VFFQVGLLTTIGLSAKNAILIV) threads the bilayer. Residues 946–972 (EFAKELHEQGKGIVEAAIEACRMRLRP) lie on the Cytoplasmic side of the membrane. A helical transmembrane segment spans residues 973 to 991 (IVMTSLAFILGVVPLAIST). At 992–1004 (GAGSGSQHAIGTG) the chain is on the periplasmic side. The chain crosses the membrane as a helical span at residues 1005 to 1027 (VIGGMVTATVLAIFWVPLFYVAV). Residues 1028–1046 (STLFKDEASKQQASVEKGQ) are Cytoplasmic-facing.

The protein belongs to the resistance-nodulation-cell division (RND) (TC 2.A.6) family. As to quaternary structure, component of the MexAB-OprM multidrug efflux complex, composed of six MexA subunits forming a hexameric tube, binding to a MexB trimer, which interact with the trimeric OprM outer membrane channel protein. OprM is thought to not directly contact MexB; instead, MexA joins MexB and OprM by forming a funnel-like hexamer anchored to the inner membrane. MexA may initially form a hexameric ring complex with MexB prior to OprM, then OprM undergoes a conformational change as it contacts MexA, allowing the periplasmic gate to open. It is thought that, under high intracellular substrate concentration, MexB ejects substrate into the tunnel formed by MexA-OprM; as the substrate level declines, conformational changes in MexB cause efflux to reduce and stop and the complex shifts to the closed state. Acts as a substrate:proton antiporter and activity is enhanced significantly when in complex with MexA and OprM, in vitro.

It is found in the cell inner membrane. Its activity is regulated as follows. Export of antibiotics and solvents is dramatically decreased in the presence of the protonophore carbonyl cyanide m-chlorophenylhydrazone (CCCP), therefore may be driven by a proton gradient. Antibiotic efflux is inhibited by pyridopyrimidine derivatives, such as ABI-PP, acting by binding to a hydrophobic pocket in MexB. Functionally, the inner membrane transporter component of the MexAB-OprM efflux system that confers multidrug resistance. Functions as the major efflux pump for n-hexane and p-xylene efflux. Has been shown in one study to be involved in the active efflux of the autoinducer N-(3-oxododecanoyl) homoserine lactone, thereby playing an indirect role in quorum-sensing; but has been shown in another study not to be involved in efflux of this autoinducer. Over-expression of the pump increases antibiotic and solvent efflux capacities. Implicated in the secretion of the siderophore pyoverdine. This is Multidrug resistance protein MexB (mexB) from Pseudomonas aeruginosa (strain ATCC 15692 / DSM 22644 / CIP 104116 / JCM 14847 / LMG 12228 / 1C / PRS 101 / PAO1).